We begin with the raw amino-acid sequence, 395 residues long: Acid ceramidase (395 aa).

The first 21 residues, 1-21, serve as a signal peptide directing secretion; that stretch reads MLGRSRLALVLLAAAVSCAVA. Cysteines 31 and 340 form a disulfide. The active-site Nucleophile is the C143. N-linked (GlcNAc...) asparagine glycans are attached at residues N173, N195, N259, N286, N342, and N348. Residues C388 and C392 are joined by a disulfide bond.

Belongs to the acid ceramidase family. In terms of assembly, heterodimer; disulfide-linked. The heterodimer is composed of the disulfide-linked alpha and beta chains produced by autocatalytic cleavage of the precursor. In terms of processing, N-glycosylated. Post-translationally, proteolytically cleaved into two chains alpha and beta that remain associated via a disulfide bond. Cleavage gives rise to a conformation change that activates the enzyme. The same catalytic Cys residue mediates the autoproteolytic cleavage and subsequent hydrolysis of lipid substrates. The beta chain may undergo an additional C-terminal processing.

The protein resides in the lysosome. Its subcellular location is the secreted. It catalyses the reaction an N-acylsphing-4-enine + H2O = sphing-4-enine + a fatty acid. The catalysed reaction is N-dodecanoylsphing-4-enine + H2O = dodecanoate + sphing-4-enine. The enzyme catalyses N-tetradecanoylsphing-4-enine + H2O = tetradecanoate + sphing-4-enine. It carries out the reaction N-hexadecanoylsphing-4-enine + H2O = sphing-4-enine + hexadecanoate. It catalyses the reaction N-octadecanoylsphing-4-enine + H2O = sphing-4-enine + octadecanoate. The catalysed reaction is N-dodecanoyl-(4R)-hydroxysphinganine + H2O = (4R)-hydroxysphinganine + dodecanoate. The enzyme catalyses N-(dodecanoyl)-sphinganine + H2O = dodecanoate + sphinganine. It carries out the reaction N-(acetyl)-sphing-4-enine + H2O = sphing-4-enine + acetate. It catalyses the reaction N-(hexanoyl)sphing-4-enine + H2O = hexanoate + sphing-4-enine. The catalysed reaction is N-octanoylsphing-4-enine + H2O = octanoate + sphing-4-enine. The enzyme catalyses N-(9Z-octadecenoyl)-sphing-4-enine + H2O = sphing-4-enine + (9Z)-octadecenoate. It carries out the reaction N-dodecanoylethanolamine + H2O = dodecanoate + ethanolamine. It participates in lipid metabolism; sphingolipid metabolism. Functionally, lysosomal ceramidase that hydrolyzes sphingolipid ceramides into sphingosine and free fatty acids at acidic pH. Ceramides, sphingosine, and its phosphorylated form sphingosine-1-phosphate are bioactive lipids that mediate cellular signaling pathways regulating several biological processes including cell proliferation, apoptosis and differentiation. Has a higher catalytic efficiency towards C12-ceramides versus other ceramides. Also catalyzes the reverse reaction allowing the synthesis of ceramides from fatty acids and sphingosine. For the reverse synthetic reaction, the natural sphingosine D-erythro isomer is more efficiently utilized as a substrate compared to D-erythro-dihydrosphingosine and D-erythro-phytosphingosine, while the fatty acids with chain lengths of 12 or 14 carbons are the most efficiently used. Also has an N-acylethanolamine hydrolase activity. By regulating the levels of ceramides, sphingosine and sphingosine-1-phosphate in the epidermis, mediates the calcium-induced differentiation of epidermal keratinocytes. Also indirectly regulates tumor necrosis factor/TNF-induced apoptosis. By regulating the intracellular balance between ceramides and sphingosine, in adrenocortical cells, probably also acts as a regulator of steroidogenesis. This chain is Acid ceramidase, found in Macaca fascicularis (Crab-eating macaque).